The primary structure comprises 236 residues: Transmembrane protein 65 (236 aa).

The transit peptide at 1-57 (MSRLLPLLRSRTARSLRPGPAAAAAPRPPSWCCCGRGLLALAAPGGPRALGTHPKKE) directs the protein to the mitochondrion. The Cytoplasmic portion of the chain corresponds to 58-106 (PIEALNTAQGARDFIYSLHSSERSCLLKELHRFESIAIAQEKLEAQPPT). Residues 107–127 (PGQLRYVFIHNAIPFIGFGFL) traverse the membrane as a helical segment. Residues 128-138 (DNAIMIVAGTH) lie on the Extracellular side of the membrane. The chain crosses the membrane as a helical span at residues 139–161 (IELSIGIILGISTMAAAALGNLV). At 162 to 205 (SDLAGLGLAGYVEALASRLGLSIPDLSPKQVDMWQTRVSSHLGK) the chain is on the cytoplasmic side. Residues 206–226 (AVGVTIGCILGMFPLIFFGGG) form a helical membrane-spanning segment. The Extracellular segment spans residues 227–236 (EDDEKLEKKN).

As to quaternary structure, monomer. Homodimer. Interacts with GJA1. Interacts weakly with DSP. Interacts with SCN1B.

The protein resides in the cell membrane. The protein localises to the mitochondrion inner membrane. Its function is as follows. Essential for maintaining proper cardiac intercalated disk (ICD) structure and function as well as cardiac conduction velocity in the heart. Its association with SCN1B is required for stabilizing the perinexus in the ICD and for localization of GJA1 and SCN5A to the ICD. May regulate the function of the gap junction protein GJA1 and may contribute to the stability and proper localization of GJA1 to cardiac intercalated disk thereby regulating gap junction communication. Regulates mitochondrial respiration and mitochondrial DNA copy number maintenance. This chain is Transmembrane protein 65 (TMEM65), found in Bos taurus (Bovine).